The following is a 213-amino-acid chain: Redox-sensing transcriptional repressor Rex (213 aa).

The segment at residues 16–55 (VYSRFLERMDRNGIVTVSSGEIAEGVGVSSAQVRKDLAYF) is a DNA-binding region (H-T-H motif). 90-95 (GAGNLG) contributes to the NAD(+) binding site.

It belongs to the transcriptional regulatory Rex family. In terms of assembly, homodimer.

The protein resides in the cytoplasm. Functionally, modulates transcription in response to changes in cellular NADH/NAD(+) redox state. This is Redox-sensing transcriptional repressor Rex from Pelotomaculum thermopropionicum (strain DSM 13744 / JCM 10971 / SI).